The sequence spans 551 residues: uncharacterized protein (551 aa).

The next 6 helical transmembrane spans lie at 1 to 21 (MIAY…IVNS), 25 to 45 (WTYF…LMVS), 99 to 119 (GALF…FGFN), 124 to 144 (LGVL…SLMW), 266 to 286 (FAFL…GVFY), and 490 to 510 (FLDL…SAED).

The protein resides in the cell membrane. This is an uncharacterized protein from Haemophilus influenzae (strain ATCC 51907 / DSM 11121 / KW20 / Rd).